The following is a 482-amino-acid chain: Putative alpha-L-fucosidase (482 aa).

An N-terminal signal peptide occupies residues 1–16; sequence MIFLIFSILFLHLANC. N-linked (GlcNAc...) asparagine glycosylation is found at Asn-182, Asn-343, Asn-359, and Asn-419.

It belongs to the glycosyl hydrolase 29 family.

It carries out the reaction an alpha-L-fucoside + H2O = L-fucose + an alcohol. In terms of biological role, alpha-L-fucosidase is responsible for hydrolyzing the alpha-1,6-linked fucose joined to the reducing-end N-acetylglucosamine of the carbohydrate moieties of glycoproteins. The chain is Putative alpha-L-fucosidase from Caenorhabditis elegans.